Consider the following 468-residue polypeptide: MLTLYNTMSRKKETFTPLHPGEIRMYVCGPTVYNYIHIGNARSAIAFDTIRRYFEYRGYKVTYVSNFTDVDDKIINAAHKTGEAPLDLAQRFIDAFMEDTTALGIEPATAHPRASQMIPDIIEFVQDLIDKEYAYAVDGDVYYRARKFKHYGELSHQNVDELEEGASQHITQDELAKKEDPIDFALWKAAKPGEISWESPWGKGRPGWHIECSVMSTKLLGDTFDIHGGGQDLEFPHHENEIAQSEAKTDKQFVRYWMHNGFVTIGEDDEKMSKSLGNFITVHDIRKTVDPQVLRFFMAGTQYRMPIRYSETNLKNAANSLNRLKIARENLTYRRRGAETGVDPQITKQLQTLKDRFVTAMDDDINVQNGLTVLFDLAKLLNEYANEETVKSESINDLLNEYDAWLQIFGVVFADQKSLDADIDALVKARDAARAAKDFAKSDQIRDQLAAQGIILEDTPQGTRWRRQ.

Position 28 (C28) interacts with Zn(2+). A 'HIGH' region motif is present at residues 30–40; that stretch reads PTVYNYIHIGN. The Zn(2+) site is built by C212, H237, and E241. The short motif at 271-275 is the 'KMSKS' region element; sequence KMSKS. Residue K274 participates in ATP binding.

The protein belongs to the class-I aminoacyl-tRNA synthetase family. As to quaternary structure, monomer. Requires Zn(2+) as cofactor.

The protein resides in the cytoplasm. It carries out the reaction tRNA(Cys) + L-cysteine + ATP = L-cysteinyl-tRNA(Cys) + AMP + diphosphate. The chain is Cysteine--tRNA ligase from Lacticaseibacillus casei (strain BL23) (Lactobacillus casei).